Reading from the N-terminus, the 432-residue chain is Keratin, type I cytoskeletal 18-B (432 aa).

Residues 1–21 (MSYSRSMYSSSSVVGGSPYRS) are compositionally biased toward low complexity. A disordered region spans residues 1–44 (MSYSRSMYSSSSVVGGSPYRSLSSAPRFAPGSSAASVHAGPGGS). The tract at residues 2-82 (SYSRSMYSSS…NVSLMGGAQN (81 aa)) is head. The tract at residues 83–118 (EKETMQDLNDRLASYLERVRSLETANKELEVQIRQH) is coil 1A. The region spanning 83 to 393 (EKETMQDLND…RLLEGDSFDL (311 aa)) is the IF rod domain. The segment at 119-134 (TEKKGPAKDWSPYYKA) is linker 1. The coil 1B stretch occupies residues 135-226 (IEDLKKQVFD…KNHQDDVNEL (92 aa)). A linker 12 region spans residues 227–250 (QAQIARSAVTVEVDAPKSQDLGKI). A coil 2 region spans residues 251-388 (MAELRAQYDG…IHTYRRLLEG (138 aa)). Residues 389 to 432 (DSFDLQDAVPTVTTQTVKKVITTTQRIVDGKVVAESNDTEVLKA) form a tail region.

It belongs to the intermediate filament family. As to quaternary structure, heterotetramer of two type I and two type II keratins. Keratin-18 associates with keratin-8. Phosphorylated. Post-translationally, proteolytically cleaved by caspases during epithelial cell apoptosis.

Its function is as follows. When phosphorylated, plays a role in filament reorganization. The sequence is that of Keratin, type I cytoskeletal 18-B (krt18-b) from Xenopus laevis (African clawed frog).